The sequence spans 96 residues: UPF0235 protein KPK_0722 (96 aa).

This sequence belongs to the UPF0235 family.

This is UPF0235 protein KPK_0722 from Klebsiella pneumoniae (strain 342).